A 173-amino-acid chain; its full sequence is Signal peptidase complex catalytic subunit sec11 (173 aa).

The Cytoplasmic segment spans residues 1–15; it reads MLGIADMQPRQLAAQ. A helical; Signal-anchor for type II membrane protein transmembrane segment spans residues 16–36; it reads ILNFALVLSTAFMMWKGLSVV. Over 37 to 173 the chain is Lumenal; it reads SDSPSPIVVV…MGVMVVLQRE (137 aa). Residues Ser50, His89, and Asp115 each act as charge relay system in the active site. Positions 159-170 are C-terminal short (CTS) helix; that stretch reads VMLGLMGVMVVL.

It belongs to the peptidase S26B family. Component of the signal peptidase complex (SPC) composed of a catalytic subunit SEC11 and three accessory subunits SPC1, SPC2 and SPC3. The complex induces a local thinning of the ER membrane which is used to measure the length of the signal peptide (SP) h-region of protein substrates. This ensures the selectivity of the complex towards h-regions shorter than 18-20 amino acids. SPC associates with the translocon complex.

Its subcellular location is the endoplasmic reticulum membrane. The enzyme catalyses Cleavage of hydrophobic, N-terminal signal or leader sequences from secreted and periplasmic proteins.. Catalytic component of the signal peptidase complex (SPC) which catalyzes the cleavage of N-terminal signal sequences from nascent proteins as they are translocated into the lumen of the endoplasmic reticulum. Specifically cleaves N-terminal signal peptides that contain a hydrophobic alpha-helix (h-region) shorter than 18-20 amino acids. This Pyrenophora tritici-repentis (strain Pt-1C-BFP) (Wheat tan spot fungus) protein is Signal peptidase complex catalytic subunit sec11 (sec11).